The chain runs to 314 residues: Transmembrane protein 248 (314 aa).

The chain crosses the membrane as a helical span at residues 21 to 41 (VVFMISVSAMAIAFLTLGYFF). The interval 78–106 (LSNDTTTPESTMTVGQARSSTQPPQSLEE) is disordered. A compositionally biased stretch (polar residues) spans 80–105 (NDTTTPESTMTVGQARSSTQPPQSLE). A run of 3 helical transmembrane segments spans residues 179-199 (QAVF…PVTV), 236-258 (FWCY…TVVV), and 270-290 (LMHT…YAVI).

The protein belongs to the TMEM248 family.

The protein localises to the membrane. The chain is Transmembrane protein 248 (Tmem248) from Mus musculus (Mouse).